The primary structure comprises 392 residues: Putative RNA-binding protein Luc7-like 2 (392 aa).

The residue at position 18 (S18) is a Phosphoserine. A coiled-coil region spans residues 102–177 (EVAKKRLAET…EAEEVYRNSM (76 aa)). The segment covering 235-257 (KQEKRNQERLKRREEREREEREK) has biased composition (basic and acidic residues). The disordered stretch occupies residues 235 to 392 (KQEKRNQERL…SSEEREAGEI (158 aa)). Over residues 258-321 (LRRSRSHSKN…RSRSHQRSRH (64 aa)) the composition is skewed to basic residues. 5-hydroxylysine; by JMJD6 is present on residues K266 and K269. 2 stretches are compositionally biased toward basic and acidic residues: residues 337-364 (KERF…DRDR) and 377-392 (RSED…AGEI).

Belongs to the Luc7 family. Interacts with SCNM1.

The protein resides in the nucleus speckle. It localises to the nucleus. Its subcellular location is the nucleoplasm. May bind to RNA via its Arg/Ser-rich domain. The chain is Putative RNA-binding protein Luc7-like 2 (LUC7L2) from Homo sapiens (Human).